Consider the following 519-residue polypeptide: MALQNAWQNTKERARETWAQLTWSEVSGSLGDLGTFLPLLIGLVQKVHLDLGTTLTITGLYNIISGWQFRIPMCVQPMKTIAAVALAGGAAGLDLPQLLHAGLFVAGCVGLLGASQAIDLFNWLVPPPVIRGVQLAVGVKLAMKGVDMALRLHGGPSSGWRPWLGTEGLVVGAVALAAMIATTLPPRAARRGTLEAADEGGLGPRPTDTAFEPLLRRLPACCGGGDRAPQVEGAAVSAERAGLLAHAEGGERSGNLDDGTEAGVGAAAGGGGCGGGGGGGRIPSALIAVVVGLAMAVLHRPGLVWELRLGPTLPRLLRPSWPDFKTGALRGGLPQLPLTTLNSVIAVTQLANALFGDKPEAERRRWRPSAVALSVALLNGAGVWLGAMPCCHGAGGLAAQYKFGARTGHAPILLGCIKAALGLLFGGSLVVLLEAFPQPLLGALLTVSGIELASVVRHTRSPRGYTFALLTAVAILALDNTGTGFLVGLVGVAAVAAYEGAVAAAAARWPRVFARGGRA.

7 helical membrane passes run 98–118 (LLHA…SQAI), 164–184 (LGTE…ATTL), 370–390 (AVAL…AMPC), 412–432 (ILLG…LVVL), 436–456 (FPQP…ASVV), 464–484 (GYTF…TGTG), and 485–505 (FLVG…VAAA).

Belongs to the SLC26A/SulP transporter (TC 2.A.53) family.

Its subcellular location is the membrane. 60% inhibition by 20 uM tungstate or by lack of glucose in the medium, but no inhibition by sulfate. Its function is as follows. High affinity molybdate transporter. Acts through an energy-dependent process. This chain is Molybdate transporter 1 (MOT1), found in Chlamydomonas reinhardtii (Chlamydomonas smithii).